A 155-amino-acid polypeptide reads, in one-letter code: Small ribosomal subunit protein bS6 (155 aa).

A disordered region spans residues 94-155 (EEHETEPSAM…RDDNSDGGQE (62 aa)). Residues 107-149 (RGDRGDRGDRRGGDRFGDRDRGDRGDRGSSRFGDRERPRRDDN) are compositionally biased toward basic and acidic residues.

The protein belongs to the bacterial ribosomal protein bS6 family.

Its function is as follows. Binds together with bS18 to 16S ribosomal RNA. The sequence is that of Small ribosomal subunit protein bS6 from Parvibaculum lavamentivorans (strain DS-1 / DSM 13023 / NCIMB 13966).